The primary structure comprises 418 residues: Cobalt-zinc-cadmium resistance protein CzcC (418 aa).

Residues 1–22 form the signal peptide; that stretch reads MRRLFLPLGLAVAFLSPNFAVA.

This sequence belongs to the outer membrane factor (OMF) (TC 1.B.17) family.

The protein resides in the cell outer membrane. In terms of biological role, czcC protein appears to modify the specificity of the system, perhaps by acting on the CzcB protein. When the CzcC protein is added to CzcA and CzcB, the efflux system gains specificity for cadmium and cobalt. The protein is Cobalt-zinc-cadmium resistance protein CzcC (czcC) of Cupriavidus metallidurans (strain ATCC 43123 / DSM 2839 / NBRC 102507 / CH34) (Ralstonia metallidurans).